The primary structure comprises 382 residues: Solvent efflux pump periplasmic linker SrpA (382 aa).

Positions 1 to 23 are cleaved as a signal peptide; it reads MRQIRSPRALRVIPLTALMLISG. Cys-24 is lipidated: N-palmitoyl cysteine. Residue Cys-24 is the site of S-diacylglycerol cysteine attachment. The stretch at 98 to 127 forms a coiled coil; sequence RTYEAQLRRAEANRTSAQNLARRYETLLKT.

This sequence belongs to the membrane fusion protein (MFP) (TC 8.A.1) family.

Its subcellular location is the cell inner membrane. The periplasmic linker protein component of an organic solvent efflux pump. Involved in export of a number of low log POW compounds including hexane (log POW 3.5), toluene (log POW 2.5) and dimethylphthalate (log POW 2.3). The solvent resistance phenotype has been postulated to depend on the operon expression level. In Pseudomonas putida (Arthrobacter siderocapsulatus), this protein is Solvent efflux pump periplasmic linker SrpA (srpA).